The chain runs to 504 residues: Tyrosine-protein kinase HCK (504 aa).

G2 is lipidated: N-myristoyl glycine. Residue C3 is the site of S-palmitoyl cysteine attachment. The residue at position 15 (T15) is a Phosphothreonine. Y30 bears the Phosphotyrosine mark. Polar residues predominate over residues 34 to 49 (PTSTIKPGPNSNNRNT). Residues 34-53 (PTSTIKPGPNSNNRNTPGIG) form a disordered region. One can recognise an SH3 domain in the interval 56–116 (SEDIIVVALY…PSNYVARVDS (61 aa)). The region spanning 122–219 (WFFKGISRKD…GLCQKLSVPC (98 aa)) is the SH2 domain. Phosphothreonine is present on T180. The residue at position 187 (Y187) is a Phosphotyrosine. Positions 240-493 (LKLEKKLGAG…YIQSVLDDFY (254 aa)) constitute a Protein kinase domain. Residues 246-254 (LGAGQFGEV) and K268 each bind ATP. D359 functions as the Proton acceptor in the catalytic mechanism. Y389 carries the phosphotyrosine; by autocatalysis modification. At S440 the chain carries Phosphoserine. Y500 is subject to Phosphotyrosine.

The protein belongs to the protein kinase superfamily. Tyr protein kinase family. SRC subfamily. In terms of assembly, interacts with ADAM15. Interacts with FASLG. Interacts with ARRB1 and ARRB2. Interacts with FCGR1A; the interaction may be indirect. Interacts with IL6ST. Interacts (via SH3 domain) with ELMO1. Interacts (via SH3 domain) with TP73. Interacts with YAP1. Interacts with ABL1 and ITGB1, and thereby recruits ABL1 to activated ITGB1. Interacts (via SH2 domain) with FLT3 (tyrosine phosphorylated). Interacts with CBL. Interacts with VAV1, WAS and RAPGEF1. Interacts (via SH3 domain) with WDCP. In terms of processing, phosphorylated on several tyrosine residues. Autophosphorylated. Becomes rapidly phosphorylated upon activation of the immunoglobulin receptors FCGR1A and FCGR2A. Phosphorylation at Tyr-389 increases kinase activity. Phosphorylation at Tyr-500 inhibits kinase activity. Kinase activity is not required for phosphorylation at Tyr-500, suggesting that this site may be a target of other kinases. Post-translationally, ubiquitinated by CBL, leading to its degradation via the proteasome. Palmitoylation requires prior myristoylation. Palmitoylation is required for caveolar localization.

The protein localises to the cytoplasmic vesicle. It localises to the secretory vesicle. The protein resides in the cytoplasm. It is found in the cytosol. Its subcellular location is the cell membrane. The protein localises to the membrane. It localises to the caveola. The protein resides in the cell junction. It is found in the focal adhesion. Its subcellular location is the cytoskeleton. The protein localises to the golgi apparatus. It localises to the lysosome. The protein resides in the nucleus. The catalysed reaction is L-tyrosyl-[protein] + ATP = O-phospho-L-tyrosyl-[protein] + ADP + H(+). Its activity is regulated as follows. Subject to autoinhibition, mediated by intramolecular interactions involving the SH2 and SH3 domains. Kinase activity is also regulated by phosphorylation at regulatory tyrosine residues. Phosphorylation at Tyr-389 is required for optimal activity. Phosphorylation at Tyr-500 inhibits kinase activity. Non-receptor tyrosine-protein kinase found in hematopoietic cells that transmits signals from cell surface receptors and plays an important role in the regulation of innate immune responses, including neutrophil, monocyte, macrophage and mast cell functions, phagocytosis, cell survival and proliferation, cell adhesion and migration. Acts downstream of receptors that bind the Fc region of immunoglobulins, such as FCGR1A and FCGR2A, but also CSF3R, PLAUR, the receptors for IFNG, IL2, IL6 and IL8, and integrins, such as ITGB1 and ITGB2. During the phagocytic process, mediates mobilization of secretory lysosomes, degranulation, and activation of NADPH oxidase to bring about the respiratory burst. Plays a role in the release of inflammatory molecules. Promotes reorganization of the actin cytoskeleton and actin polymerization, formation of podosomes and cell protrusions. Inhibits TP73-mediated transcription activation and TP73-mediated apoptosis. Phosphorylates CBL in response to activation of immunoglobulin gamma Fc region receptors. Phosphorylates ADAM15, BCR, ELMO1, FCGR2A, GAB1, GAB2, RAPGEF1, STAT5B, TP73, VAV1 and WAS. This Macaca fascicularis (Crab-eating macaque) protein is Tyrosine-protein kinase HCK (HCK).